A 676-amino-acid chain; its full sequence is UvrABC system protein B (676 aa).

Residues 39-424 (RGILDGIPSQ…RGHIIEQIIR (386 aa)) enclose the Helicase ATP-binding domain. Residue 52-59 (GTTGSGKT) participates in ATP binding. The Beta-hairpin motif lies at 105–128 (YYDYYQPEAYIARSDTYIEKSLLI). The Helicase C-terminal domain occupies 441 to 604 (QIDDLLEEIR…ITPKPIIKPI (164 aa)). A disordered region spans residues 611–631 (KEGAQEDSRPETQSTEDLESS). One can recognise a UVR domain in the interval 629-664 (ESSIKQYEEAMYKAAQDFQFDEAAKYRDLMNAAKRQ).

The protein belongs to the UvrB family. As to quaternary structure, forms a heterotetramer with UvrA during the search for lesions. Interacts with UvrC in an incision complex.

The protein localises to the cytoplasm. The UvrABC repair system catalyzes the recognition and processing of DNA lesions. A damage recognition complex composed of 2 UvrA and 2 UvrB subunits scans DNA for abnormalities. Upon binding of the UvrA(2)B(2) complex to a putative damaged site, the DNA wraps around one UvrB monomer. DNA wrap is dependent on ATP binding by UvrB and probably causes local melting of the DNA helix, facilitating insertion of UvrB beta-hairpin between the DNA strands. Then UvrB probes one DNA strand for the presence of a lesion. If a lesion is found the UvrA subunits dissociate and the UvrB-DNA preincision complex is formed. This complex is subsequently bound by UvrC and the second UvrB is released. If no lesion is found, the DNA wraps around the other UvrB subunit that will check the other stand for damage. This chain is UvrABC system protein B, found in Chlamydia muridarum (strain MoPn / Nigg).